The primary structure comprises 403 residues: MTESTFPNYPRLVLSKGREKSLLRRHPWVFSGAVSRLEGKANPGETIDIVDHQGKWLARGAWSPASQIRARVWTFDKTEPVDIAFFTRRLRQAQHWRDWLAKKDGLDSYRLIAGESDGLPGVTIDRFGHFLVLQLLSAGAEYQRAALISALQTCYPDCAIYDRSDVAVRKKEGMALAQGPVTGELPPALLPIEEHGMKLLVDIQGGHKTGYYLDQRDSRLATRRYVENQRVLNCFSYTGGFAVSALMGGCRQVVSVDTSQDALDIARQNVELNQLDLSKAEFVRDDVFKLLRAYRERGEKFDVIIMDPPKFVENKSQLMGACRGYKDINMLAIQLLNPGGILLTFSCSGLMTSDLFQKIIADAAIDAGRDVQFIEQFRQAADHPVIATYPEGLYLKGFACRVM.

The PUA domain maps to 9–88 (YPRLVLSKGR…EPVDIAFFTR (80 aa)).

This sequence belongs to the methyltransferase superfamily. RlmI family.

The protein resides in the cytoplasm. The enzyme catalyses cytidine(1962) in 23S rRNA + S-adenosyl-L-methionine = 5-methylcytidine(1962) in 23S rRNA + S-adenosyl-L-homocysteine + H(+). Specifically methylates the cytosine at position 1962 (m5C1962) of 23S rRNA. The chain is Ribosomal RNA large subunit methyltransferase I from Salmonella arizonae (strain ATCC BAA-731 / CDC346-86 / RSK2980).